The primary structure comprises 81 residues: Sulfur carrier protein TusA (81 aa).

The active-site Cysteine persulfide intermediate is Cys19.

Belongs to the sulfur carrier protein TusA family. As to quaternary structure, interacts with IscS.

It localises to the cytoplasm. The protein operates within tRNA modification. In terms of biological role, sulfur carrier protein involved in sulfur trafficking in the cell. Part of a sulfur-relay system required for 2-thiolation during synthesis of 2-thiouridine of the modified wobble base 5-methylaminomethyl-2-thiouridine (mnm(5)s(2)U) in tRNA. Interacts with IscS and stimulates its cysteine desulfurase activity. Accepts an activated sulfur from IscS, which is then transferred to TusD, and thus determines the direction of sulfur flow from IscS to 2-thiouridine formation. Also appears to be involved in sulfur transfer for the biosynthesis of molybdopterin. The chain is Sulfur carrier protein TusA from Escherichia coli O17:K52:H18 (strain UMN026 / ExPEC).